We begin with the raw amino-acid sequence, 176 residues long: Protein GrpE (176 aa).

The protein belongs to the GrpE family. As to quaternary structure, homodimer.

The protein localises to the cytoplasm. In terms of biological role, participates actively in the response to hyperosmotic and heat shock by preventing the aggregation of stress-denatured proteins, in association with DnaK and GrpE. It is the nucleotide exchange factor for DnaK and may function as a thermosensor. Unfolded proteins bind initially to DnaJ; upon interaction with the DnaJ-bound protein, DnaK hydrolyzes its bound ATP, resulting in the formation of a stable complex. GrpE releases ADP from DnaK; ATP binding to DnaK triggers the release of the substrate protein, thus completing the reaction cycle. Several rounds of ATP-dependent interactions between DnaJ, DnaK and GrpE are required for fully efficient folding. This chain is Protein GrpE, found in Meiothermus ruber.